Reading from the N-terminus, the 95-residue chain is Aspartyl/glutamyl-tRNA(Asn/Gln) amidotransferase subunit C (95 aa).

The protein belongs to the GatC family. As to quaternary structure, heterotrimer of A, B and C subunits.

It carries out the reaction L-glutamyl-tRNA(Gln) + L-glutamine + ATP + H2O = L-glutaminyl-tRNA(Gln) + L-glutamate + ADP + phosphate + H(+). The enzyme catalyses L-aspartyl-tRNA(Asn) + L-glutamine + ATP + H2O = L-asparaginyl-tRNA(Asn) + L-glutamate + ADP + phosphate + 2 H(+). Allows the formation of correctly charged Asn-tRNA(Asn) or Gln-tRNA(Gln) through the transamidation of misacylated Asp-tRNA(Asn) or Glu-tRNA(Gln) in organisms which lack either or both of asparaginyl-tRNA or glutaminyl-tRNA synthetases. The reaction takes place in the presence of glutamine and ATP through an activated phospho-Asp-tRNA(Asn) or phospho-Glu-tRNA(Gln). In Gluconacetobacter diazotrophicus (strain ATCC 49037 / DSM 5601 / CCUG 37298 / CIP 103539 / LMG 7603 / PAl5), this protein is Aspartyl/glutamyl-tRNA(Asn/Gln) amidotransferase subunit C.